A 407-amino-acid chain; its full sequence is Aminomethyltransferase, mitochondrial (407 aa).

The N-terminal 29 residues, 1 to 29, are a transit peptide targeting the mitochondrion; the sequence is MRGGLWQLGQSITRRLGQSDKKTIVRRCY. Substrate contacts are provided by glutamate 234, arginine 265, and tyrosine 403.

Belongs to the GcvT family. As to quaternary structure, the glycine cleavage system is composed of four proteins: P, T, L and H.

It is found in the mitochondrion. It carries out the reaction N(6)-[(R)-S(8)-aminomethyldihydrolipoyl]-L-lysyl-[protein] + (6S)-5,6,7,8-tetrahydrofolate = N(6)-[(R)-dihydrolipoyl]-L-lysyl-[protein] + (6R)-5,10-methylene-5,6,7,8-tetrahydrofolate + NH4(+). Functionally, the glycine cleavage system catalyzes the degradation of glycine. This is Aminomethyltransferase, mitochondrial (GDCST) from Flaveria anomala (Yellowtops).